The primary structure comprises 207 residues: 2,3-bisphosphoglycerate-dependent phosphoglycerate mutase (207 aa).

Substrate is bound by residues 10–17 (RHGQSEWN), 23–24 (TG), Arg-62, 89–92 (ERDY), Lys-100, 116–117 (RR), and 160–161 (GN). The active-site Tele-phosphohistidine intermediate is His-11. The active-site Proton donor/acceptor is the Glu-89.

The protein belongs to the phosphoglycerate mutase family. BPG-dependent PGAM subfamily. Homodimer.

It carries out the reaction (2R)-2-phosphoglycerate = (2R)-3-phosphoglycerate. The protein operates within carbohydrate degradation; glycolysis; pyruvate from D-glyceraldehyde 3-phosphate: step 3/5. Catalyzes the interconversion of 2-phosphoglycerate and 3-phosphoglycerate. The polypeptide is 2,3-bisphosphoglycerate-dependent phosphoglycerate mutase (Xanthobacter autotrophicus (strain ATCC BAA-1158 / Py2)).